The following is a 438-amino-acid chain: MSHEEDLIDYSDEEIQPTEVPANGDAAAAKGGLAAPDASGEKKGSYVGIHSTGFRDFLLKDELVRAITDCGFEHPSEVQQVTIPQAILGNDVLCQAKSGLGKTAVFVLATLQQMDEKPEPGVASILVMCHTRELAYQIRNEYNRFAKFLPDVKVGVFYGGTPVAKDIELLSNKDTHPHIIVGTPGRINALVRDRHLRLANLKHFVLDECDKMLDQPDMRNDVQAIFRATPAHKQVMMFSATLSKEIRAVCKKFMQNPLEIYVDDEKKLTLHGLQQFYVKLDEREKNRKLNDLLDNLEFNQVIIFVRSTLRCTELDKLLRECNFPSTAVHSGIGQEERIKRYKEFKEFQTRICVSTDIFGRGIDVERINVAINYDMPDKADAYLHRVGRAGRFGTKGLSISFVSSQDDEAVLKAIEERFAAEIPEFPEDGISSASYMDN.

Residues 1-16 (MSHEEDLIDYSDEEIQ) show a composition bias toward acidic residues. The tract at residues 1-41 (MSHEEDLIDYSDEEIQPTEVPANGDAAAAKGGLAAPDASGE) is disordered. Low complexity predominate over residues 21-38 (PANGDAAAAKGGLAAPDA). The short motif at 52-80 (TGFRDFLLKDELVRAITDCGFEHPSEVQQ) is the Q motif element. Residues 83-260 (IPQAILGNDV…KKFMQNPLEI (178 aa)) form the Helicase ATP-binding domain. Position 96–103 (96–103 (AKSGLGKT)) interacts with ATP. A DEAD box motif is present at residues 207 to 210 (DECD). In terms of domain architecture, Helicase C-terminal spans 288-433 (KLNDLLDNLE…EFPEDGISSA (146 aa)).

Belongs to the DEAD box helicase family. DECD subfamily.

It is found in the nucleus. The catalysed reaction is ATP + H2O = ADP + phosphate + H(+). Functionally, ATP-binding RNA helicase involved in transcription elongation and required for the export of mRNA out of the nucleus. SUB2 also plays a role in pre-mRNA splicing and spliceosome assembly. May be involved in rDNA and telomeric silencing, and maintenance of genome integrity. The chain is ATP-dependent RNA helicase SUB2 (SUB2) from Phaeosphaeria nodorum (strain SN15 / ATCC MYA-4574 / FGSC 10173) (Glume blotch fungus).